We begin with the raw amino-acid sequence, 489 residues long: Cysteine--tRNA ligase (489 aa).

Cys-27 serves as a coordination point for Zn(2+). Positions Val-29 to His-39 match the 'HIGH' region motif. Zn(2+)-binding residues include Cys-211, His-236, and Glu-240. A 'KMSKS' region motif is present at residues Lys-268–Ser-272. Residue Lys-271 coordinates ATP.

This sequence belongs to the class-I aminoacyl-tRNA synthetase family. As to quaternary structure, monomer. The cofactor is Zn(2+).

Its subcellular location is the cytoplasm. The enzyme catalyses tRNA(Cys) + L-cysteine + ATP = L-cysteinyl-tRNA(Cys) + AMP + diphosphate. This Prochlorococcus marinus (strain AS9601) protein is Cysteine--tRNA ligase.